A 226-amino-acid chain; its full sequence is Ribosomal RNA small subunit methyltransferase G (226 aa).

S-adenosyl-L-methionine is bound by residues G95, L100, 146 to 147, and R159; that span reads VE.

Belongs to the methyltransferase superfamily. RNA methyltransferase RsmG family.

Its subcellular location is the cytoplasm. The catalysed reaction is guanosine(527) in 16S rRNA + S-adenosyl-L-methionine = N(7)-methylguanosine(527) in 16S rRNA + S-adenosyl-L-homocysteine. Its function is as follows. Specifically methylates the N7 position of guanine in position 527 of 16S rRNA. The polypeptide is Ribosomal RNA small subunit methyltransferase G (Acidovorax ebreus (strain TPSY) (Diaphorobacter sp. (strain TPSY))).